Here is a 336-residue protein sequence, read N- to C-terminus: Anthranilate phosphoribosyltransferase (336 aa).

Residues Gly81, 84 to 85, Ser89, 91 to 94, 109 to 117, and Ala121 each bind 5-phospho-alpha-D-ribose 1-diphosphate; these read GD, NIST, and KHGNRGLSS. Position 81 (Gly81) interacts with anthranilate. Ser93 is a Mg(2+) binding site. Asn112 serves as a coordination point for anthranilate. Position 167 (Arg167) interacts with anthranilate. Residues Asp225 and Glu226 each coordinate Mg(2+).

Belongs to the anthranilate phosphoribosyltransferase family. As to quaternary structure, homodimer. Mg(2+) serves as cofactor.

The enzyme catalyses N-(5-phospho-beta-D-ribosyl)anthranilate + diphosphate = 5-phospho-alpha-D-ribose 1-diphosphate + anthranilate. It participates in amino-acid biosynthesis; L-tryptophan biosynthesis; L-tryptophan from chorismate: step 2/5. Its function is as follows. Catalyzes the transfer of the phosphoribosyl group of 5-phosphorylribose-1-pyrophosphate (PRPP) to anthranilate to yield N-(5'-phosphoribosyl)-anthranilate (PRA). The polypeptide is Anthranilate phosphoribosyltransferase (Mesorhizobium japonicum (strain LMG 29417 / CECT 9101 / MAFF 303099) (Mesorhizobium loti (strain MAFF 303099))).